We begin with the raw amino-acid sequence, 791 residues long: Linear element protein rec10 (791 aa).

Disordered stretches follow at residues 462 to 523 (NSVP…AKSN) and 644 to 672 (LLDG…TLIS). The Nuclear localization signal motif lies at 485-492 (QRRKDGKF). A compositionally biased stretch (basic residues) spans 493–503 (AKSTKRKKQKS). The span at 644–657 (LLDGTCSSPPNNEC) shows a compositional bias: polar residues.

As to quaternary structure, component of linear elements (LinEs), which are similar to synaptonemal complexes, at least composed of rec27, rec25, rec10 and mug20. Interacts with rec25; the interaction is direct. Interacts with hop1 (via N-terminus); the interaction is direct. Interacts with rec15 (via C-terminus); the interaction is direct.

It localises to the nucleus. It is found in the chromosome. Its function is as follows. Organizes linear element components on chromosomes and is thus required for meiotic DNA recombination. The sequence is that of Linear element protein rec10 from Schizosaccharomyces pombe (strain 972 / ATCC 24843) (Fission yeast).